A 985-amino-acid chain; its full sequence is MGEHGGLVDLLDSDLEYSINRETPDKNNCLSQQSVNDSHLTAKTGGLNARSFLSTLSDDSLIEYVNQLSQTNKNNSNPTAGTLRFTTKNISCDELHADLGGGEDSPIARSVIEIQESDSNGDDVKKNTVYTREAYFHEKAHGQTLQDQILKDQYKDQISSQSSKIFKNCVIYINGYTKPGRLQLHEMIVLHGGKFLHYLSSKKTVTHIVASNLPLKKRIEFANYKVVSPDWIVDSVKEARLLPWQNYSLTSKLDEQQKKLDNCKTVNSIPLPSETSLHKGSKCVGSALLPVEQQSPVNLNNLEAKRIVACDDPDFLTSYFAHSRLHHLSAWKANLKDKFLNENIHKYTKITDKDTYIIFHIDFDCFFATVAYLCRSSSFSACDFKRDPIVVCHGTKNSDIASCNYVARSYGIKNGMWVSQAEKMLPNGIKLISLPYTFEQFQLKSEAFYSTLKRLNIFNLILPISIDEAVCVRIIPDNIHNTNTLNARLCEEIRQEIFQGTNGCTVSIGCSDSLVLARLALKMAKPNGYNITFKSNLSEEFWSSFKLDDLPGVGHSTLSRLESTFDSPHSLNDLRKRYTLDALKASVGSKLGMKIHLALQGQDDEESLKILYDPKEVLQRKSLSIDINWGIRFKNITQVDLFIERGCQYLLEKLNEINKTTSQITLKLMRRCKDAPIEPPKYMGMGRCDSFSRSSRLGIPTNEFGIIATEMKSLYRTLGCPPMELRGLALQFNKLVDVGPDNNQLKLRLPFKTIVTNRAFEALPEDVKNDINNEFEKRNYKRKESGLTSNSLSSKKKGFAISRLEVNDLPSTMEEQFMNELPTQIRAEVRHDLRIQKKIQQTKLGNLQEKIKRREESLQNEKNHFMGQNSIFQPIKFQNLTRFKKICQLVKQWVAETLGDGGPHEKDVKLFVKYLIKLCDSNRVHLVLHLSNLISRELNLCAFLNQDHSGFQTWERILLNDIIPLLNRNKHTYQTVRKLDMDFEV.

Positions 161–249 (QSSKIFKNCV…RLLPWQNYSL (89 aa)) constitute a BRCT domain. The interval 319 to 329 (YFAHSRLHHLS) is interaction with target DNA. DCTP is bound by residues Arg-324 and 362–366 (DFDCF). The region spanning 358–554 (IFHIDFDCFF…FKLDDLPGVG (197 aa)) is the UmuC domain. Residues Asp-362 and Phe-363 each coordinate Mg(2+). The interaction with target DNA stretch occupies residues 395 to 397 (TKN). DCTP-binding positions include 402 to 408 (SCNYVAR), Asn-414, and Asp-467. Positions 467 and 468 each coordinate Mg(2+). Interaction with target DNA stretches follow at residues 554–557 (GHST) and 620–628 (RKSLSIDIN).

It belongs to the DNA polymerase type-Y family. As to quaternary structure, interacts with REV7. Mg(2+) serves as cofactor.

The protein resides in the nucleus. The protein localises to the mitochondrion. Deoxycytidyl transferase involved in DNA repair. Transfers a dCMP residue from dCTP to the 3'-end of a DNA primer in a template-dependent reaction. May assist in the first step in the bypass of abasic lesions by the insertion of a nucleotide opposite the lesion. Required for normal induction of mutations by physical and chemical agents. Involved in mitochondrial DNA mutagenesis. This Saccharomyces cerevisiae (strain ATCC 204508 / S288c) (Baker's yeast) protein is DNA repair protein REV1 (REV1).